The sequence spans 217 residues: Ribosomal RNA small subunit methyltransferase G (217 aa).

S-adenosyl-L-methionine-binding positions include Gly79, Leu84, 130–131 (IE), and Arg145.

Belongs to the methyltransferase superfamily. RNA methyltransferase RsmG family.

The protein localises to the cytoplasm. It catalyses the reaction guanosine(527) in 16S rRNA + S-adenosyl-L-methionine = N(7)-methylguanosine(527) in 16S rRNA + S-adenosyl-L-homocysteine. Its function is as follows. Specifically methylates the N7 position of guanine in position 527 of 16S rRNA. The chain is Ribosomal RNA small subunit methyltransferase G from Hahella chejuensis (strain KCTC 2396).